The primary structure comprises 98 residues: MPSISTNITLAFITALLGMLIFRSHLMSSLLCLEGMMLSMFILSTLTILSLHFTTSFMMPILLLVFAACEAAVGLALLVTVSNTYGLDYIQNLNLLQC.

The next 3 membrane-spanning stretches (helical) occupy residues 2-22, 29-49, and 61-81; these read PSIS…MLIF, SLLC…LTIL, and ILLL…LVTV.

The protein belongs to the complex I subunit 4L family. In terms of assembly, core subunit of respiratory chain NADH dehydrogenase (Complex I) which is composed of 45 different subunits.

It localises to the mitochondrion inner membrane. The enzyme catalyses a ubiquinone + NADH + 5 H(+)(in) = a ubiquinol + NAD(+) + 4 H(+)(out). In terms of biological role, core subunit of the mitochondrial membrane respiratory chain NADH dehydrogenase (Complex I) which catalyzes electron transfer from NADH through the respiratory chain, using ubiquinone as an electron acceptor. Part of the enzyme membrane arm which is embedded in the lipid bilayer and involved in proton translocation. The sequence is that of NADH-ubiquinone oxidoreductase chain 4L (MT-ND4L) from Hapalemur aureus (Golden bamboo lemur).